The chain runs to 533 residues: Calcium/calmodulin-dependent protein kinase type II (533 aa).

ATP contacts are provided by residues 18–26 and Lys-41; that span reads LGKGAFSVV. The active-site Proton acceptor is the Asp-134. Thr-284 is modified (phosphothreonine; by autocatalysis). Polar residues-rich tracts occupy residues 316–345 and 377–391; these read TSDS…QPTS and PPST…SQTI. Disordered regions lie at residues 316 to 347 and 369 to 400; these read TSDS…TSPA and LLNK…EKAQ.

It belongs to the protein kinase superfamily. CAMK Ser/Thr protein kinase family. CaMK subfamily. In terms of assembly, dodecamer. Subunits are tightly packed around a central ring-shaped scaffold with extensive contacts between the regulatory segment of one kinase and the catalytic domain of another enabling cooperative activation of a subunit by the adjacent molecule. Interacts with and phosphorylates daf-16; the interaction promotes daf-16 nuclear localization. Interacts with egl-2 and tir-1. Interacts with nsy-1. The cofactor is Mg(2+).

Its subcellular location is the cytoplasm. The protein resides in the cell projection. It localises to the axon. It is found in the perikaryon. The catalysed reaction is L-seryl-[protein] + ATP = O-phospho-L-seryl-[protein] + ADP + H(+). The enzyme catalyses L-threonyl-[protein] + ATP = O-phospho-L-threonyl-[protein] + ADP + H(+). Its activity is regulated as follows. Ca(2+)/calmodulin binding removes an autoinhibitory regulatory segment located C-terminal to the kinase domain. This releases the catalytic activity of the enzyme and makes accessible a regulatory residue Thr-284. Phosphorylation of Thr-284 by another kinase domain within the oligomeric holoenzyme keeps CaMKII active in the absence of Ca(2+)/calmodulin by preventing the rebinding of the regulatory segment to the kinase domain and by increasing the affinity of calmodulin for the enzyme. Can respond to high-frequency Ca(2+) pulses to become Ca(2+) independent. Its function is as follows. Role in locomotion and neuronal cell fate specification. Required for the regulation of synaptic density, egg laying, defecation, and meiotic maturation. Required for viability under chronic osmotic stress in which it acts downstream of osr-1. Regulates the synaptic trafficking of glr-1. Bidirectional modulator of neurotransmitter release with negative modulatory effects mainly mediated via slo-1 activation. May suppress the functional response to an internal pacemaker, perhaps by modulating the activity of the IP3 receptor. In Caenorhabditis briggsae, this protein is Calcium/calmodulin-dependent protein kinase type II.